Here is a 303-residue protein sequence, read N- to C-terminus: Glutaminase (303 aa).

Residues serine 61, asparagine 111, glutamate 155, asparagine 162, tyrosine 186, tyrosine 238, and valine 256 each contribute to the substrate site.

Belongs to the glutaminase family. In terms of assembly, homotetramer.

It carries out the reaction L-glutamine + H2O = L-glutamate + NH4(+). This is Glutaminase from Marinomonas sp. (strain MWYL1).